Here is a 304-residue protein sequence, read N- to C-terminus: Fructose permease IIC component (304 aa).

A PTS EIIC type-2 domain is found at 1-304 (IHSADPKDPT…GIIKKPVEEK (304 aa)). Helical transmembrane passes span 20–40 (FIGS…FIAM), 62–82 (NAGF…VILL), 98–118 (PVLI…QFVI), 140–160 (NLVL…GGPL), 181–201 (AAIM…TTFF), 214–234 (ITCY…FAAA), 238–258 (VIPA…FFRV), and 277–297 (LLYL…LGII).

It localises to the cell membrane. In terms of biological role, the phosphoenolpyruvate-dependent sugar phosphotransferase system (PTS), a major carbohydrate active -transport system, catalyzes the phosphorylation of incoming sugar substrates concomitant with their translocation across the cell membrane. This system is involved in fructose transport. The chain is Fructose permease IIC component (fruA) from Bacillus amyloliquefaciens (Bacillus velezensis).